Consider the following 236-residue polypeptide: Rab-like protein 3 (236 aa).

A small GTPase-like region spans residues 1–236 (MASLDRVKVL…GGTLKSLHYD (236 aa)). Residues 16–21 (GVGKSS), 148–150 (KLD), and 179–180 (DC) each bind GTP.

It belongs to the small GTPase superfamily. Rab family. In terms of assembly, homodimer. Interacts with GPR89; the interaction stabilizes GPR89. Interacts with RAP1GDS1.

Required for KRAS signaling regulation and modulation of cell proliferation. Regulator of KRAS prenylation, and probably prenylation of other small GTPases. Required for lymphocyte development and function. Not required for myeloid cell development. In Bos taurus (Bovine), this protein is Rab-like protein 3 (RABL3).